A 105-amino-acid chain; its full sequence is UPF0060 membrane protein Ajs_1326 (105 aa).

Helical transmembrane passes span 4–24 (FALF…PYLW), 30–50 (SAWL…LLTL), 60–80 (AAYG…VDGI), and 82–102 (PTAW…LIMF).

This sequence belongs to the UPF0060 family.

Its subcellular location is the cell inner membrane. The chain is UPF0060 membrane protein Ajs_1326 from Acidovorax sp. (strain JS42).